We begin with the raw amino-acid sequence, 157 residues long: Ribosomal RNA large subunit methyltransferase H (157 aa).

S-adenosyl-L-methionine contacts are provided by residues leucine 73, glycine 105, and 124-129; that span reads LSRMTF.

It belongs to the RNA methyltransferase RlmH family. Homodimer.

Its subcellular location is the cytoplasm. The enzyme catalyses pseudouridine(1915) in 23S rRNA + S-adenosyl-L-methionine = N(3)-methylpseudouridine(1915) in 23S rRNA + S-adenosyl-L-homocysteine + H(+). In terms of biological role, specifically methylates the pseudouridine at position 1915 (m3Psi1915) in 23S rRNA. The polypeptide is Ribosomal RNA large subunit methyltransferase H (Porphyromonas gingivalis (strain ATCC 33277 / DSM 20709 / CIP 103683 / JCM 12257 / NCTC 11834 / 2561)).